The primary structure comprises 188 residues: Elongation factor P (188 aa).

This sequence belongs to the elongation factor P family.

The protein resides in the cytoplasm. It functions in the pathway protein biosynthesis; polypeptide chain elongation. Its function is as follows. Involved in peptide bond synthesis. Stimulates efficient translation and peptide-bond synthesis on native or reconstituted 70S ribosomes in vitro. Probably functions indirectly by altering the affinity of the ribosome for aminoacyl-tRNA, thus increasing their reactivity as acceptors for peptidyl transferase. This chain is Elongation factor P, found in Aeromonas salmonicida (strain A449).